A 176-amino-acid polypeptide reads, in one-letter code: Inorganic pyrophosphatase (176 aa).

Positions 30, 44, and 56 each coordinate substrate. The Mg(2+) site is built by Asp66, Asp71, and Asp103. Residue Tyr142 participates in substrate binding.

The protein belongs to the PPase family. In terms of assembly, homohexamer. Mg(2+) serves as cofactor.

It localises to the cytoplasm. The catalysed reaction is diphosphate + H2O = 2 phosphate + H(+). Catalyzes the hydrolysis of inorganic pyrophosphate (PPi) forming two phosphate ions. The chain is Inorganic pyrophosphatase from Brucella melitensis biotype 1 (strain ATCC 23456 / CCUG 17765 / NCTC 10094 / 16M).